The sequence spans 305 residues: Ribosomal RNA small subunit methyltransferase H (305 aa).

S-adenosyl-L-methionine-binding positions include 30–32, Asp49, Phe74, Asp96, and Gln103; that span reads GGH.

It belongs to the methyltransferase superfamily. RsmH family.

It localises to the cytoplasm. The enzyme catalyses cytidine(1402) in 16S rRNA + S-adenosyl-L-methionine = N(4)-methylcytidine(1402) in 16S rRNA + S-adenosyl-L-homocysteine + H(+). Its function is as follows. Specifically methylates the N4 position of cytidine in position 1402 (C1402) of 16S rRNA. In Francisella tularensis subsp. mediasiatica (strain FSC147), this protein is Ribosomal RNA small subunit methyltransferase H.